The sequence spans 333 residues: Casein kinase II subunit beta-1 (333 aa).

Residues 58–78 (VEPEDDDDEEEEDEEDEEDMS) are compositionally biased toward acidic residues. Disordered regions lie at residues 58–92 (VEPE…ERRH) and 282–333 (ARRY…ESEL). Basic residues predominate over residues 305 to 316 (ASRRRGPPRRQK).

Belongs to the casein kinase 2 subunit beta family. Tetramer composed of two alpha chains, one beta chain and one beta' chain. Phosphorylated by alpha subunit.

Regulatory subunit of casein kinase II/CK2. As part of the kinase complex regulates the basal catalytic activity of the alpha subunit a constitutively active serine/threonine-protein kinase that phosphorylates a large number of substrates containing acidic residues C-terminal to the phosphorylated serine or threonine. In Neurospora crassa (strain ATCC 24698 / 74-OR23-1A / CBS 708.71 / DSM 1257 / FGSC 987), this protein is Casein kinase II subunit beta-1 (ckb-1).